The sequence spans 1241 residues: ATP-dependent helicase/nuclease subunit A (1241 aa).

Residues serine 12–arginine 485 form the UvrD-like helicase ATP-binding domain. Alanine 33 to threonine 40 is a binding site for ATP. The 301-residue stretch at glycine 505 to glycine 805 folds into the UvrD-like helicase C-terminal domain.

It belongs to the helicase family. AddA subfamily. Heterodimer of AddA and AddB/RexB. The cofactor is Mg(2+).

It carries out the reaction Couples ATP hydrolysis with the unwinding of duplex DNA by translocating in the 3'-5' direction.. It catalyses the reaction ATP + H2O = ADP + phosphate + H(+). The heterodimer acts as both an ATP-dependent DNA helicase and an ATP-dependent, dual-direction single-stranded exonuclease. Recognizes the chi site generating a DNA molecule suitable for the initiation of homologous recombination. The AddA nuclease domain is required for chi fragment generation; this subunit has the helicase and 3' -&gt; 5' nuclease activities. The chain is ATP-dependent helicase/nuclease subunit A from Bacillus thuringiensis (strain Al Hakam).